We begin with the raw amino-acid sequence, 285 residues long: Guanylate kinase 2, chloroplastic/mitochondrial (285 aa).

Low complexity predominate over residues 1-19; that stretch reads MLLTRRFSSALARSPLLPR. The transit peptide at 1–42 directs the protein to the chloroplast and mitochondrion; the sequence is MLLTRRFSSALARSPLLPRSLPPPRAVPATPPAPRPPPRRLM. A disordered region spans residues 1–66; it reads MLLTRRFSSA…PPPPSGADKD (66 aa). Residues 20-36 show a composition bias toward pro residues; it reads SLPPPRAVPATPPAPRP. Over residues 40-50 the composition is skewed to low complexity; sequence RLMSSSSSGWH. Residues 91-272 enclose the Guanylate kinase-like domain; sequence PMILVISGPS…AVKQVESIID (182 aa). Residue 98 to 105 participates in ATP binding; the sequence is GPSGVGKD. Catalysis depends on residues R130, R224, and R235. Residue N255 participates in ATP binding.

The protein belongs to the guanylate kinase family. Monomer.

The protein resides in the plastid. Its subcellular location is the chloroplast. It is found in the mitochondrion. It carries out the reaction GMP + ATP = GDP + ADP. Functionally, essential for recycling GMP and indirectly, cGMP. Essential for chloroplast differentiation at early stage of leaf development. May not be involved in the synthesis and maintenance of the organellar DNA during leaf development. This is Guanylate kinase 2, chloroplastic/mitochondrial (V2) from Oryza sativa subsp. japonica (Rice).